Consider the following 246-residue polypeptide: NH(3)-dependent NAD(+) synthetase (246 aa).

ATP is bound at residue 29–36; the sequence is GLSGGIDS. Residue Asp35 coordinates Mg(2+). Residue Arg110 participates in deamido-NAD(+) binding. Thr130 is an ATP binding site. Glu135 is a binding site for Mg(2+). ATP contacts are provided by Lys159 and Ser181.

Belongs to the NAD synthetase family. In terms of assembly, homodimer.

It catalyses the reaction deamido-NAD(+) + NH4(+) + ATP = AMP + diphosphate + NAD(+) + H(+). Its pathway is cofactor biosynthesis; NAD(+) biosynthesis; NAD(+) from deamido-NAD(+) (ammonia route): step 1/1. Catalyzes the ATP-dependent amidation of deamido-NAD to form NAD. Uses ammonia as a nitrogen source. This chain is NH(3)-dependent NAD(+) synthetase, found in Campylobacter jejuni subsp. doylei (strain ATCC BAA-1458 / RM4099 / 269.97).